The sequence spans 124 residues: Fluoride-specific ion channel FluC (124 aa).

Transmembrane regions (helical) follow at residues 5 to 25 (ILAVSIAGIAGTLLRFATGTW), 38 to 58 (TLAVNIVGCLIIGVLYGLFLL), 69 to 89 (GLIVGFVGGLTTFSSFSLDTL), and 99 to 119 (LALGYAGISVFGGLLATWAGL). G76 and T79 together coordinate Na(+).

It belongs to the fluoride channel Fluc/FEX (TC 1.A.43) family.

It localises to the cell inner membrane. The catalysed reaction is fluoride(in) = fluoride(out). With respect to regulation, na(+) is not transported, but it plays an essential structural role and its presence is essential for fluoride channel function. Fluoride-specific ion channel. Important for reducing fluoride concentration in the cell, thus reducing its toxicity. The chain is Fluoride-specific ion channel FluC from Pseudomonas syringae pv. syringae (strain B728a).